Here is a 407-residue protein sequence, read N- to C-terminus: Guanine nucleotide-binding protein alpha-1 subunit (407 aa).

A lipid anchor (N-myristoyl glycine) is attached at G2. C3 carries S-palmitoyl cysteine lipidation. Residues 73–407 (NDIKVLLLGA…MSNNLQSLMF (335 aa)) enclose the G-alpha domain. The interval 76-89 (KVLLLGAGDSGKTT) is G1 motif. Residues D84, S85, G86, K87, T88, T89, D190, L215, T221, G243, N309, K310, D312, and A380 each contribute to the GTP site. T88 provides a ligand contact to Mg(2+). Residues 213 to 221 (DILHCRIKT) form a G2 motif region. Position 221 (T221) interacts with Mg(2+). The segment at 236-245 (YRFFDVGGQR) is G3 motif. The segment at 305–312 (ILFLNKLD) is G4 motif. The interval 378–383 (TTATDT) is G5 motif.

This sequence belongs to the G-alpha family. G(q) subfamily. In terms of assembly, g proteins are composed of 3 units; alpha, beta and gamma. The alpha chain contains the guanine nucleotide binding site. It depends on Mg(2+) as a cofactor.

In terms of biological role, implicated in the mating and sporulation pathway. Probably coupled to mating-factor receptors. May act in concert with Ras1. In Schizosaccharomyces pombe (strain 972 / ATCC 24843) (Fission yeast), this protein is Guanine nucleotide-binding protein alpha-1 subunit (gpa1).